Here is a 269-residue protein sequence, read N- to C-terminus: Gap junction gamma-3 protein (269 aa).

The Extracellular segment spans residues 1 to 33 (MLLLELPIKCRMCGRFLRQLLAQESQHSTPVGR). Residues 34–54 (FLLPMLMGFRLLILVSSGPGV) form a helical membrane-spanning segment. Residues 55–86 (FGNDENEFICHLGQPGCKTICYDVFRPLSPLR) lie on the Cytoplasmic side of the membrane. A helical transmembrane segment spans residues 87–107 (FWAFQVILMAVPSAIYVAFTL). At 108–145 (YHVIGYWEVPGKENKEQETQISKGDHSKDVSGAKSLKL) the chain is on the extracellular side. Residues 146–166 (LWAYVAHLGVRLALEGAALGV) traverse the membrane as a helical segment. Topologically, residues 167–205 (QYNLYGFKMSSTFICREDPCIGSTTCFQSHPSEKTIFLN) are cytoplasmic. A helical membrane pass occupies residues 206-226 (IMFGISGACFLFIFLELALLG). Residues 227-269 (LGRFWRIYKHKLSFLKKLPTSESSVRSKDTTDELSVVEAKEPF) are Extracellular-facing. S261 carries the phosphoserine modification.

Belongs to the connexin family. Gamma-type subfamily. In terms of assembly, a connexon is composed of a hexamer of connexins. CNS specific. Expression is restricted to brain, spinal cord, and sciatic nerve.

The protein localises to the cell membrane. It localises to the cell junction. It is found in the gap junction. In terms of biological role, one gap junction consists of a cluster of closely packed pairs of transmembrane channels, the connexons, through which materials of low MW diffuse from one cell to a neighboring cell. The sequence is that of Gap junction gamma-3 protein (Gjc3) from Mus musculus (Mouse).